Reading from the N-terminus, the 387-residue chain is Exodeoxyribonuclease 7 large subunit (387 aa).

Belongs to the XseA family. In terms of assembly, heterooligomer composed of large and small subunits.

Its subcellular location is the cytoplasm. It catalyses the reaction Exonucleolytic cleavage in either 5'- to 3'- or 3'- to 5'-direction to yield nucleoside 5'-phosphates.. Functionally, bidirectionally degrades single-stranded DNA into large acid-insoluble oligonucleotides, which are then degraded further into small acid-soluble oligonucleotides. This Campylobacter jejuni subsp. jejuni serotype O:23/36 (strain 81-176) protein is Exodeoxyribonuclease 7 large subunit.